Reading from the N-terminus, the 732-residue chain is Protein kinase YpkA (732 aa).

The 273-residue stretch at 136–408 (VAETDKFAEG…SNEARLHEFL (273 aa)) folds into the Protein kinase domain. Residues 142-150 (FAEGESHIS) and Lys-163 contribute to the ATP site. Catalysis depends on Asp-270, which acts as the Proton acceptor.

It belongs to the protein kinase superfamily. Ser/Thr protein kinase family.

The protein localises to the secreted. It catalyses the reaction L-seryl-[protein] + ATP = O-phospho-L-seryl-[protein] + ADP + H(+). It carries out the reaction L-threonyl-[protein] + ATP = O-phospho-L-threonyl-[protein] + ADP + H(+). In terms of biological role, acts as a virulence determinant. In Yersinia pestis, this protein is Protein kinase YpkA (ypkA).